We begin with the raw amino-acid sequence, 226 residues long: Movement and silencing protein TGBp1 (226 aa).

The (+)RNA virus helicase ATP-binding domain occupies 1-138 (MDILIISLKS…IASCGFDFET (138 aa)). The region spanning 139–226 (NSQEEGHLEV…KGLTYVRAGT (88 aa)) is the (+)RNA virus helicase C-terminal domain.

It belongs to the Tymovirales TGBp1 protein family. As to quaternary structure, homodimer and homooligomer. Interacts with capsid protein. Interacts with host AGO1; this interaction targets the host protein for degradation, thereby suppressing the antiviral RNA silencing.

The protein localises to the host cytoplasm. Its function is as follows. Transports viral genome to neighboring plant cells directly through plasmosdesmata, without any budding. The movement protein allows efficient cell to cell propagation, by bypassing the host cell wall barrier. Increases plasmodesma size exclusion limit. Acts as a suppressor of RNA-mediated gene silencing, also known as post-transcriptional gene silencing (PTGS), a mechanism of plant viral defense that limits the accumulation of viral RNAs. This chain is Movement and silencing protein TGBp1, found in Brassica campestris (Field mustard).